The chain runs to 170 residues: Urease accessory protein UreE (170 aa).

This sequence belongs to the UreE family.

It is found in the cytoplasm. Functionally, involved in urease metallocenter assembly. Binds nickel. Probably functions as a nickel donor during metallocenter assembly. This chain is Urease accessory protein UreE, found in Helicobacter pylori (strain P12).